We begin with the raw amino-acid sequence, 560 residues long: Dihydroxy-acid dehydratase (560 aa).

A [2Fe-2S] cluster-binding site is contributed by Cys-50. Position 82 (Asp-82) interacts with Mg(2+). Position 123 (Cys-123) interacts with [2Fe-2S] cluster. The Mg(2+) site is built by Asp-124 and Lys-125. Lys-125 is subject to N6-carboxylysine. Residue Cys-195 participates in [2Fe-2S] cluster binding. Glu-447 contacts Mg(2+). Ser-473 acts as the Proton acceptor in catalysis.

The protein belongs to the IlvD/Edd family. As to quaternary structure, homodimer. Requires [2Fe-2S] cluster as cofactor. Mg(2+) is required as a cofactor.

The catalysed reaction is (2R)-2,3-dihydroxy-3-methylbutanoate = 3-methyl-2-oxobutanoate + H2O. It catalyses the reaction (2R,3R)-2,3-dihydroxy-3-methylpentanoate = (S)-3-methyl-2-oxopentanoate + H2O. It participates in amino-acid biosynthesis; L-isoleucine biosynthesis; L-isoleucine from 2-oxobutanoate: step 3/4. The protein operates within amino-acid biosynthesis; L-valine biosynthesis; L-valine from pyruvate: step 3/4. Its function is as follows. Functions in the biosynthesis of branched-chain amino acids. Catalyzes the dehydration of (2R,3R)-2,3-dihydroxy-3-methylpentanoate (2,3-dihydroxy-3-methylvalerate) into 2-oxo-3-methylpentanoate (2-oxo-3-methylvalerate) and of (2R)-2,3-dihydroxy-3-methylbutanoate (2,3-dihydroxyisovalerate) into 2-oxo-3-methylbutanoate (2-oxoisovalerate), the penultimate precursor to L-isoleucine and L-valine, respectively. This Methylibium petroleiphilum (strain ATCC BAA-1232 / LMG 22953 / PM1) protein is Dihydroxy-acid dehydratase.